The sequence spans 370 residues: Muconate cycloisomerase 1 (370 aa).

Lys-166 is an active-site residue. Mn(2+) is bound by residues Asp-195, Glu-221, and Asp-246.

It belongs to the mandelate racemase/muconate lactonizing enzyme family. Homooctamer. Mn(2+) is required as a cofactor.

It catalyses the reaction (S)-muconolactone = cis,cis-muconate + H(+). It functions in the pathway aromatic compound metabolism; beta-ketoadipate pathway; 5-oxo-4,5-dihydro-2-furylacetate from catechol: step 2/3. Its function is as follows. Catalyzes a syn cycloisomerization. The protein is Muconate cycloisomerase 1 (catB) of Acinetobacter baylyi (strain ATCC 33305 / BD413 / ADP1).